A 167-amino-acid polypeptide reads, in one-letter code: Sporulation membrane protein YtrI (167 aa).

The helical transmembrane segment at 15–35 threads the bilayer; sequence FFAGMMCGAVISWFFFLFTYG.

The protein resides in the cell membrane. In terms of biological role, involved in sporulation. This Bacillus subtilis (strain 168) protein is Sporulation membrane protein YtrI (ytrI).